We begin with the raw amino-acid sequence, 274 residues long: Dermonecrotic toxin SdSicTox-betaIIB1bvii (274 aa).

Residue His5 is part of the active site. Glu25 and Asp27 together coordinate Mg(2+). His41 acts as the Nucleophile in catalysis. Intrachain disulfides connect Cys45–Cys51 and Cys47–Cys190. Asp85 is a binding site for Mg(2+).

The protein belongs to the arthropod phospholipase D family. Class II subfamily. Mg(2+) is required as a cofactor. As to expression, expressed by the venom gland.

The protein resides in the secreted. The enzyme catalyses an N-(acyl)-sphingosylphosphocholine = an N-(acyl)-sphingosyl-1,3-cyclic phosphate + choline. The catalysed reaction is an N-(acyl)-sphingosylphosphoethanolamine = an N-(acyl)-sphingosyl-1,3-cyclic phosphate + ethanolamine. It catalyses the reaction a 1-acyl-sn-glycero-3-phosphocholine = a 1-acyl-sn-glycero-2,3-cyclic phosphate + choline. It carries out the reaction a 1-acyl-sn-glycero-3-phosphoethanolamine = a 1-acyl-sn-glycero-2,3-cyclic phosphate + ethanolamine. In terms of biological role, dermonecrotic toxins cleave the phosphodiester linkage between the phosphate and headgroup of certain phospholipids (sphingolipid and lysolipid substrates), forming an alcohol (often choline) and a cyclic phosphate. This toxin acts on sphingomyelin (SM). It may also act on ceramide phosphoethanolamine (CPE), lysophosphatidylcholine (LPC) and lysophosphatidylethanolamine (LPE), but not on lysophosphatidylserine (LPS), and lysophosphatidylglycerol (LPG). It acts by transphosphatidylation, releasing exclusively cyclic phosphate products as second products. Induces dermonecrosis, hemolysis, increased vascular permeability, edema, inflammatory response, and platelet aggregation. This Sicarius cf. damarensis (strain GJB-2008) (Six-eyed sand spider) protein is Dermonecrotic toxin SdSicTox-betaIIB1bvii.